The sequence spans 326 residues: Undecaprenyl-phosphate 4-deoxy-4-formamido-L-arabinose transferase (326 aa).

A run of 2 helical transmembrane segments spans residues 235-255 (MLSV…LLLI) and 270-290 (VFML…GMGL).

It belongs to the glycosyltransferase 2 family.

The protein resides in the cell inner membrane. It carries out the reaction UDP-4-deoxy-4-formamido-beta-L-arabinose + di-trans,octa-cis-undecaprenyl phosphate = 4-deoxy-4-formamido-alpha-L-arabinopyranosyl di-trans,octa-cis-undecaprenyl phosphate + UDP. The protein operates within glycolipid biosynthesis; 4-amino-4-deoxy-alpha-L-arabinose undecaprenyl phosphate biosynthesis; 4-amino-4-deoxy-alpha-L-arabinose undecaprenyl phosphate from UDP-4-deoxy-4-formamido-beta-L-arabinose and undecaprenyl phosphate: step 1/2. Its pathway is bacterial outer membrane biogenesis; lipopolysaccharide biosynthesis. In terms of biological role, catalyzes the transfer of 4-deoxy-4-formamido-L-arabinose from UDP to undecaprenyl phosphate. The modified arabinose is attached to lipid A and is required for resistance to polymyxin and cationic antimicrobial peptides. The polypeptide is Undecaprenyl-phosphate 4-deoxy-4-formamido-L-arabinose transferase (Sodalis glossinidius (strain morsitans)).